Reading from the N-terminus, the 103-residue chain is Small ribosomal subunit protein uS10 (103 aa).

Belongs to the universal ribosomal protein uS10 family. In terms of assembly, part of the 30S ribosomal subunit.

Functionally, involved in the binding of tRNA to the ribosomes. This is Small ribosomal subunit protein uS10 from Pseudoalteromonas atlantica (strain T6c / ATCC BAA-1087).